The primary structure comprises 1032 residues: Chitin synthase 8 (1032 aa).

Pro residues-rich tracts occupy residues 1–11 and 26–41; these read MRPGDIYPPPQ and PPQPQPYPPQPYPPQQ. Positions 1–220 are disordered; the sequence is MRPGDIYPPP…DDDMNDSHPL (220 aa). 3 stretches are compositionally biased toward polar residues: residues 65 to 78, 98 to 107, and 143 to 160; these read MSPTPQEPQGSRYN, LPTQSLSPFN, and TNPSHLPPQQQLTPSYSY. A glycan (N-linked (GlcNAc...) asparagine) is linked at N78. Residues 176-188 show a composition bias toward low complexity; the sequence is PHHSSQSSVSSIP. N215, N304, N473, N545, and N691 each carry an N-linked (GlcNAc...) asparagine glycan. A run of 7 helical transmembrane segments spans residues 728 to 748, 762 to 782, 796 to 816, 842 to 862, 870 to 890, 972 to 992, and 995 to 1015; these read TLNMVFAWFALGNYYIAFFVL, VNIPLHYIYIALLLWCFLLSL, SMVGFALITIYMLFAAIFLAV, IVISLLATYGLYIISSLMALE, FFQYLLIAPSYINVLNVYAFC, VLLVWTMTNGALVAVILQASG, and NSLATTYMGVLLYTVAGLAFF.

This sequence belongs to the chitin synthase family.

It localises to the cell membrane. It carries out the reaction [(1-&gt;4)-N-acetyl-beta-D-glucosaminyl](n) + UDP-N-acetyl-alpha-D-glucosamine = [(1-&gt;4)-N-acetyl-beta-D-glucosaminyl](n+1) + UDP + H(+). Functionally, polymerizes chitin, a structural polymer of the cell wall and septum, by transferring the sugar moiety of UDP-GlcNAc to the non-reducing end of the growing chitin polymer. The polypeptide is Chitin synthase 8 (Cryptococcus neoformans var. grubii serotype A (strain H99 / ATCC 208821 / CBS 10515 / FGSC 9487) (Filobasidiella neoformans var. grubii)).